Consider the following 178-residue polypeptide: Fibroin heavy chain (178 aa).

Residues 1–21 (MRVKTFVILCCALQYVAYTNA) form the signal peptide. Residues 149–178 (AVGAGAGAGAAAGSGAGAGAGYGAASGAGA) form a highly repetitive region.

As to quaternary structure, silk fibroin elementary unit consists in a disulfide-linked heavy and light chain and a p25 glycoprotein in molar ratios of 6:6:1. This results in a complex of approximately 2.3 MDa. The interchain disulfide bridge is essential for the intracellular transport and secretion of fibroin. Produced exclusively in the posterior (PSG) section of silk glands, which are essentially modified salivary glands.

Its function is as follows. Core component of the silk filament; a strong, insoluble and chemically inert fiber. This Bombyx mandarina (Wild silk moth) protein is Fibroin heavy chain (FIBH).